The following is a 317-amino-acid chain: Tetraspanin-15 (317 aa).

Positions 1 to 43 are disordered; sequence MADNAQVVPVEEPAATATATATATATTEPEAKSSDQMESQSDN. The Cytoplasmic portion of the chain corresponds to 1–60; sequence MADNAQVVPVEEPAATATATATATATTEPEAKSSDQMESQSDNKPPMGTLMALVNILAAG. The span at 7 to 28 shows a compositional bias: low complexity; sequence VVPVEEPAATATATATATATTE. The chain crosses the membrane as a helical span at residues 61 to 81; the sequence is VLPIFTFVLSLTLLGYAVWLL. The Extracellular portion of the chain corresponds to 82-96; the sequence is YMRSYDCEDILGLPR. The chain crosses the membrane as a helical span at residues 97–117; that stretch reads VQTLASVGLLAVFVVSNAALF. Topologically, residues 118-126 are cytoplasmic; sequence LRRKFPMPA. The chain crosses the membrane as a helical span at residues 127–147; that stretch reads LVVMVVVLLLMLFIGLAYAGV. The Extracellular portion of the chain corresponds to 148-287; the sequence is NEMQSRRFPA…IRSVRRKWWQ (140 aa). Asparagine 224 carries N-linked (GlcNAc...) asparagine glycosylation. Residues 288–308 form a helical membrane-spanning segment; sequence LGIFLIVISILLLMSHLLIFL. Over 309 to 317 the chain is Cytoplasmic; it reads ATFWERFKG.

The protein belongs to the tetraspanin (TM4SF) family.

Its subcellular location is the membrane. Its function is as follows. May be involved in the regulation of cell differentiation. This is Tetraspanin-15 (TET15) from Arabidopsis thaliana (Mouse-ear cress).